The chain runs to 229 residues: Ribonuclease T (229 aa).

Residues 23-197 (VIIDVETAGF…YDTERTAKLF (175 aa)) form the Exonuclease domain. Mg(2+)-binding residues include D26, E28, H184, and D189. Residue H184 is the Proton donor/acceptor of the active site.

It belongs to the RNase T family. In terms of assembly, homodimer. The cofactor is Mg(2+).

Functionally, trims short 3' overhangs of a variety of RNA species, leaving a one or two nucleotide 3' overhang. Responsible for the end-turnover of tRNA: specifically removes the terminal AMP residue from uncharged tRNA (tRNA-C-C-A). Also appears to be involved in tRNA biosynthesis. The protein is Ribonuclease T of Haemophilus influenzae (strain ATCC 51907 / DSM 11121 / KW20 / Rd).